The chain runs to 159 residues: Ribosomal RNA large subunit methyltransferase H (159 aa).

S-adenosyl-L-methionine is bound by residues L76, G108, and 127-132; that span reads LSKMTY.

This sequence belongs to the RNA methyltransferase RlmH family. Homodimer.

It localises to the cytoplasm. The enzyme catalyses pseudouridine(1915) in 23S rRNA + S-adenosyl-L-methionine = N(3)-methylpseudouridine(1915) in 23S rRNA + S-adenosyl-L-homocysteine + H(+). Specifically methylates the pseudouridine at position 1915 (m3Psi1915) in 23S rRNA. This chain is Ribosomal RNA large subunit methyltransferase H, found in Ruminiclostridium cellulolyticum (strain ATCC 35319 / DSM 5812 / JCM 6584 / H10) (Clostridium cellulolyticum).